The following is a 232-amino-acid chain: Large ribosomal subunit protein uL1 (232 aa).

The protein belongs to the universal ribosomal protein uL1 family. In terms of assembly, part of the 50S ribosomal subunit.

Binds directly to 23S rRNA. The L1 stalk is quite mobile in the ribosome, and is involved in E site tRNA release. Its function is as follows. Protein L1 is also a translational repressor protein, it controls the translation of the L11 operon by binding to its mRNA. The protein is Large ribosomal subunit protein uL1 of Xylella fastidiosa (strain 9a5c).